The chain runs to 264 residues: Glutamate racemase (264 aa).

Substrate is bound by residues 10 to 11 and 42 to 43; these read DS and YG. Catalysis depends on cysteine 73, which acts as the Proton donor/acceptor. Substrate is bound at residue 74 to 75; that stretch reads NT. Cysteine 183 functions as the Proton donor/acceptor in the catalytic mechanism. 184-185 lines the substrate pocket; that stretch reads TH.

The protein belongs to the aspartate/glutamate racemases family.

The catalysed reaction is L-glutamate = D-glutamate. It functions in the pathway cell wall biogenesis; peptidoglycan biosynthesis. Provides the (R)-glutamate required for cell wall biosynthesis. This is Glutamate racemase from Streptococcus uberis (strain ATCC BAA-854 / 0140J).